A 136-amino-acid polypeptide reads, in one-letter code: Large ribosomal subunit protein bL17 (136 aa).

The protein belongs to the bacterial ribosomal protein bL17 family. As to quaternary structure, part of the 50S ribosomal subunit. Contacts protein L32.

The sequence is that of Large ribosomal subunit protein bL17 from Rhodopseudomonas palustris (strain BisB5).